The chain runs to 49 residues: Large ribosomal subunit protein eL40 (49 aa).

This sequence belongs to the eukaryotic ribosomal protein eL40 family.

The polypeptide is Large ribosomal subunit protein eL40 (Methanosarcina acetivorans (strain ATCC 35395 / DSM 2834 / JCM 12185 / C2A)).